A 249-amino-acid polypeptide reads, in one-letter code: 2,3-bisphosphoglycerate-dependent phosphoglycerate mutase (249 aa).

Substrate contacts are provided by residues 9 to 16, 22 to 23, R61, 88 to 91, K99, 115 to 116, and 184 to 185; these read RHGQSQWN, TG, ERHY, RR, and GN. H10 (tele-phosphohistidine intermediate) is an active-site residue. E88 functions as the Proton donor/acceptor in the catalytic mechanism.

This sequence belongs to the phosphoglycerate mutase family. BPG-dependent PGAM subfamily. As to quaternary structure, homodimer.

The catalysed reaction is (2R)-2-phosphoglycerate = (2R)-3-phosphoglycerate. It functions in the pathway carbohydrate degradation; glycolysis; pyruvate from D-glyceraldehyde 3-phosphate: step 3/5. Its function is as follows. Catalyzes the interconversion of 2-phosphoglycerate and 3-phosphoglycerate. This chain is 2,3-bisphosphoglycerate-dependent phosphoglycerate mutase, found in Xanthomonas oryzae pv. oryzae (strain PXO99A).